The following is a 323-amino-acid chain: Mycothiol acetyltransferase (323 aa).

Glu-44 is a binding site for 1D-myo-inositol 2-(L-cysteinylamino)-2-deoxy-alpha-D-glucopyranoside. N-acetyltransferase domains follow at residues 77-176 (GQDL…VSLR) and 173-323 (VSLR…VKEG). 98 to 100 (IAV) is a binding site for acetyl-CoA. 1D-myo-inositol 2-(L-cysteinylamino)-2-deoxy-alpha-D-glucopyranoside contacts are provided by Glu-200, Lys-240, and Glu-253. Acetyl-CoA-binding positions include 257-259 (VGV) and 264-270 (QGSGLGK). Tyr-291 contributes to the 1D-myo-inositol 2-(L-cysteinylamino)-2-deoxy-alpha-D-glucopyranoside binding site.

It belongs to the acetyltransferase family. MshD subfamily. As to quaternary structure, monomer.

The catalysed reaction is 1D-myo-inositol 2-(L-cysteinylamino)-2-deoxy-alpha-D-glucopyranoside + acetyl-CoA = mycothiol + CoA + H(+). Catalyzes the transfer of acetyl from acetyl-CoA to desacetylmycothiol (Cys-GlcN-Ins) to form mycothiol. This Pseudarthrobacter chlorophenolicus (strain ATCC 700700 / DSM 12829 / CIP 107037 / JCM 12360 / KCTC 9906 / NCIMB 13794 / A6) (Arthrobacter chlorophenolicus) protein is Mycothiol acetyltransferase.